The following is a 900-amino-acid chain: Chaperone protein ClpB 2 (900 aa).

One can recognise a Clp R domain in the interval 15–154 (PDRFSDPAWE…ESLLRQPSVS (140 aa)). Repeat regions lie at residues 18–81 (FSDP…LADQ) and 91–154 (IGED…PSVS). Residues 151-183 (PSVSPAPAPPPVPTAASAPAPTPRSAPAPRVMA) form a disordered region. Positions 154–163 (SPAPAPPPVP) are enriched in pro residues. The tract at residues 191-376 (ELEREPSALE…RRFQQVLIRE (186 aa)) is NBD1. 244 to 251 (GEPGVGKT) is a binding site for ATP. The linker stretch occupies residues 377-581 (PDLELSLEIL…IADLVARWTG (205 aa)). Residues 427 to 557 (IDLIDEAAAQ…LEASQAEAQS (131 aa)) are a coiled coil. The segment at 591 to 803 (ERRKLLALES…RIDEVIRFRP (213 aa)) is NBD2. Residue 641 to 648 (GPTGVGKT) coordinates ATP. Residues 804–900 (LKVKDLVRIV…GASLEFEPLE (97 aa)) are C-terminal.

It belongs to the ClpA/ClpB family. As to quaternary structure, homohexamer. The oligomerization is ATP-dependent.

The protein localises to the cytoplasm. Part of a stress-induced multi-chaperone system, it is involved in the recovery of the cell from heat-induced damage, in cooperation with DnaK, DnaJ and GrpE. Acts before DnaK, in the processing of protein aggregates. Protein binding stimulates the ATPase activity; ATP hydrolysis unfolds the denatured protein aggregates, which probably helps expose new hydrophobic binding sites on the surface of ClpB-bound aggregates, contributing to the solubilization and refolding of denatured protein aggregates by DnaK. The polypeptide is Chaperone protein ClpB 2 (clpB2) (Parasynechococcus marenigrum (strain WH8102)).